A 644-amino-acid polypeptide reads, in one-letter code: DNA gyrase subunit B (644 aa).

Positions 429–543 constitute a Toprim domain; the sequence is CEIFLVEGDS…AGYVYIAQPP (115 aa). Mg(2+) is bound by residues glutamate 435, aspartate 508, and aspartate 510.

Belongs to the type II topoisomerase GyrB family. As to quaternary structure, heterotetramer, composed of two GyrA and two GyrB chains. In the heterotetramer, GyrA contains the active site tyrosine that forms a transient covalent intermediate with DNA, while GyrB binds cofactors and catalyzes ATP hydrolysis. Mg(2+) serves as cofactor. The cofactor is Mn(2+). It depends on Ca(2+) as a cofactor.

It is found in the cytoplasm. It carries out the reaction ATP-dependent breakage, passage and rejoining of double-stranded DNA.. In terms of biological role, a type II topoisomerase that negatively supercoils closed circular double-stranded (ds) DNA in an ATP-dependent manner to modulate DNA topology and maintain chromosomes in an underwound state. Negative supercoiling favors strand separation, and DNA replication, transcription, recombination and repair, all of which involve strand separation. Also able to catalyze the interconversion of other topological isomers of dsDNA rings, including catenanes and knotted rings. Type II topoisomerases break and join 2 DNA strands simultaneously in an ATP-dependent manner. This is DNA gyrase subunit B from Staphylococcus aureus (strain MRSA252).